Reading from the N-terminus, the 919-residue chain is MFS-type transporter clz9 (919 aa).

Positions 1–11 (MAASTKPTTKL) are enriched in polar residues. A disordered region spans residues 1–33 (MAASTKPTTKLSTEEDDVSRRDSESSADFMKSN). Residues 69 to 89 (VVASFAAAISPFSTSTYYPVV) traverse the membrane as a helical segment. N104 carries an N-linked (GlcNAc...) asparagine glycan. 3 helical membrane-spanning segments follow: residues 132-152 (PMFL…ALQN), 192-212 (LIYA…IGGL), and 222-242 (VFWF…IFFG). A glycan (N-linked (GlcNAc...) asparagine) is linked at N260. A run of 4 helical transmembrane segments spans residues 303-323 (FILS…TSVL), 333-353 (YDAV…LLAY), 393-413 (LGFV…YGWQ), and 418-438 (APLA…TGVM). N461 carries N-linked (GlcNAc...) asparagine glycosylation. A helical transmembrane segment spans residues 465–485 (LLLGAGAVAVVGPLNKSAGIG). One can recognise a DDE-1 domain in the interval 641–809 (REWVTLIQGI…FTSANICSSF (169 aa)). The segment at 840-897 (EAPWEAKTPSNRKKKQIQKRGTLTKGEGEDTLAQKEADQQIEREQRQGGEQSGRSRQA) is disordered. Positions 865–886 (GEGEDTLAQKEADQQIEREQRQ) are enriched in basic and acidic residues. Positions 887 to 896 (GGEQSGRSRQ) are enriched in low complexity. A glycan (N-linked (GlcNAc...) asparagine) is linked at N915.

It belongs to the major facilitator superfamily. CAR1 family.

The protein resides in the membrane. MFS-type transporter; part of the gene cluster that mediates the biosynthesis of squalestatin S1 (SQS1, also known as zaragozic acid A), a heavily oxidized fungal polyketide that offers potent cholesterol lowering activity by targeting squalene synthase (SS). The polypeptide is MFS-type transporter clz9 (Cochliobolus lunatus (Filamentous fungus)).